A 335-amino-acid chain; its full sequence is Urokinase plasminogen activator surface receptor (335 aa).

Positions Met1–Gly22 are cleaved as a signal peptide. 3 UPAR/Ly6 domains span residues Leu23–Tyr114, Leu115–Gly213, and Arg214–Gly305. 3 cysteine pairs are disulfide-bonded: Cys25-Cys46, Cys28-Cys34, and Cys39-Cys67. Asn74 is a glycosylation site (N-linked (GlcNAc...) asparagine). 11 disulfides stabilise this stretch: Cys93–Cys98, Cys117–Cys144, Cys120–Cys127, Cys137–Cys169, Cys175–Cys192, Cys193–Cys198, Cys216–Cys244, Cys219–Cys227, Cys237–Cys263, Cys269–Cys287, and Cys288–Cys293. Residues Asn184, Asn194, Asn222, and Asn255 are each glycosylated (N-linked (GlcNAc...) asparagine). Gly305 carries GPI-anchor amidated glycine lipidation. Residues Ala306–Thr335 constitute a propeptide, removed in mature form.

Monomer. Interacts with MRC2. Interacts (via the UPAR/Ly6 domains) with SRPX2. Interacts with FAP (seprase); the interaction occurs at the cell surface of invadopodia membrane. Interacts with SORL1 (via N-terminal ectodomain); this interaction decreases PLAUR internalization. The ternary complex composed of PLAUR-PLAU-SERPINE1 also interacts with SORL1. Interacts with CD82; this interaction prevents PLAUR from binding to its high affinity ligand PLAU. Expressed in neurons of the rolandic area of the brain (at protein level). Expressed in the brain.

The protein localises to the cell membrane. It localises to the cell projection. It is found in the invadopodium membrane. The protein resides in the secreted. In terms of biological role, acts as a receptor for urokinase plasminogen activator. Plays a role in localizing and promoting plasmin formation. Mediates the proteolysis-independent signal transduction activation effects of U-PA. It is subject to negative-feedback regulation by U-PA which cleaves it into an inactive form. The polypeptide is Urokinase plasminogen activator surface receptor (PLAUR) (Homo sapiens (Human)).